The primary structure comprises 160 residues: Cyanate hydratase (160 aa).

Catalysis depends on residues Arg100, Glu103, and Ser126.

The protein belongs to the cyanase family.

It carries out the reaction cyanate + hydrogencarbonate + 3 H(+) = NH4(+) + 2 CO2. Functionally, catalyzes the reaction of cyanate with bicarbonate to produce ammonia and carbon dioxide. This Aspergillus flavus (strain ATCC 200026 / FGSC A1120 / IAM 13836 / NRRL 3357 / JCM 12722 / SRRC 167) protein is Cyanate hydratase.